A 563-amino-acid polypeptide reads, in one-letter code: Arginine--tRNA ligase (563 aa).

The 'HIGH' region motif lies at Pro121–His131.

It belongs to the class-I aminoacyl-tRNA synthetase family. In terms of assembly, monomer.

It is found in the cytoplasm. It carries out the reaction tRNA(Arg) + L-arginine + ATP = L-arginyl-tRNA(Arg) + AMP + diphosphate. The protein is Arginine--tRNA ligase of Streptococcus agalactiae serotype Ia (strain ATCC 27591 / A909 / CDC SS700).